The sequence spans 107 residues: UPF0145 protein PC1_1703 (107 aa).

This sequence belongs to the UPF0145 family.

The chain is UPF0145 protein PC1_1703 from Pectobacterium carotovorum subsp. carotovorum (strain PC1).